Consider the following 213-residue polypeptide: Orotate phosphoribosyltransferase (213 aa).

Lysine 26 is a binding site for 5-phospho-alpha-D-ribose 1-diphosphate. Residue 34-35 (FF) participates in orotate binding. 5-phospho-alpha-D-ribose 1-diphosphate is bound by residues 72 to 73 (YK), arginine 99, lysine 100, lysine 103, histidine 105, and 124 to 132 (DDVITAGTA). Orotate contacts are provided by threonine 128 and arginine 156.

It belongs to the purine/pyrimidine phosphoribosyltransferase family. PyrE subfamily. As to quaternary structure, homodimer. Mg(2+) serves as cofactor.

The catalysed reaction is orotidine 5'-phosphate + diphosphate = orotate + 5-phospho-alpha-D-ribose 1-diphosphate. The protein operates within pyrimidine metabolism; UMP biosynthesis via de novo pathway; UMP from orotate: step 1/2. Functionally, catalyzes the transfer of a ribosyl phosphate group from 5-phosphoribose 1-diphosphate to orotate, leading to the formation of orotidine monophosphate (OMP). This Aliivibrio fischeri (strain MJ11) (Vibrio fischeri) protein is Orotate phosphoribosyltransferase.